Consider the following 181-residue polypeptide: High mobility group protein B4 (181 aa).

Residues 9-79 constitute a DNA-binding region (HMG box 1); sequence PKVNVSSYIH…RYQQEMMNYI (71 aa). Positions 80–89 are enriched in basic residues; the sequence is GKRRKRRKRD. The tract at residues 80-100 is disordered; that stretch reads GKRRKRRKRDPKAPRKPPSSF. A DNA-binding region (HMG box 2) is located at residues 93–161; it reads PRKPPSSFLL…KYFEEQEAYR (69 aa).

It belongs to the HMGB family. Expressed in adult germ cells (at protein level).

Its subcellular location is the nucleus. The protein resides in the chromosome. This Mus musculus (Mouse) protein is High mobility group protein B4 (Hmgb4).